Consider the following 552-residue polypeptide: Chaperonin GroEL (552 aa).

ATP is bound by residues 29-32 (TAGP), Lys-50, 86-90 (DGTTT), Gly-417, and Asp-499.

Belongs to the chaperonin (HSP60) family. In terms of assembly, forms a cylinder of 14 subunits composed of two heptameric rings stacked back-to-back. Interacts with the co-chaperonin GroES.

The protein resides in the cytoplasm. It catalyses the reaction ATP + H2O + a folded polypeptide = ADP + phosphate + an unfolded polypeptide.. Together with its co-chaperonin GroES, plays an essential role in assisting protein folding. The GroEL-GroES system forms a nano-cage that allows encapsulation of the non-native substrate proteins and provides a physical environment optimized to promote and accelerate protein folding. This is Chaperonin GroEL from Ehrlichia canis (strain Jake).